The sequence spans 390 residues: Lissencephaly-1 homolog (390 aa).

A LisH domain is found at 7-39 (QREEINRAVAEYLQNNGYSEAFNMLLKEASLSE). Residues 54 to 80 (TTVLRLQRKVNDLEAKLLESQQEINHG) adopt a coiled-coil conformation. 7 WD repeats span residues 104–145 (GHRL…KTLK), 146–185 (GHTD…DCLK), 189–228 (GHEH…CVFT), 231–270 (GHND…RNWY), 272–313 (EIMS…VIFT), 316–355 (AHEN…CMKA), and 358–390 (AHEH…WECR).

It belongs to the WD repeat LIS1/nudF family.

The protein resides in the cytoplasm. It localises to the cytoskeleton. The protein localises to the microtubule organizing center. Its subcellular location is the centrosome. Functionally, positively regulates the activity of the minus-end directed microtubule motor protein dynein. May enhance dynein-mediated microtubule sliding by targeting dynein to the microtubule plus end. Required for several dynein- and microtubule-dependent processes. This Caenorhabditis briggsae protein is Lissencephaly-1 homolog.